The following is a 223-amino-acid chain: Protein phosphatase 1 regulatory subunit 3C (223 aa).

A CBM21 domain is found at R104–H209.

In terms of assembly, interacts with PPP1CC catalytic subunit of PP1 and associates with glycogen. Forms complexes with glycogen phosphorylase, glycogen synthase and phosphorylase kinase which is necessary for its regulation of PP1 activity.

Acts as a glycogen-targeting subunit for PP1 and regulates its activity. Activates glycogen synthase, reduces glycogen phosphorylase activity and limits glycogen breakdown. The sequence is that of Protein phosphatase 1 regulatory subunit 3C from Xenopus tropicalis (Western clawed frog).